A 208-amino-acid polypeptide reads, in one-letter code: Large ribosomal subunit protein uL3 (208 aa).

Positions 117-149 are disordered; the sequence is FQGVIKRHGQSRGPMAHGSRYHRRPGSMGPVSP.

Belongs to the universal ribosomal protein uL3 family. In terms of assembly, part of the 50S ribosomal subunit. Forms a cluster with proteins L14 and L19.

Its function is as follows. One of the primary rRNA binding proteins, it binds directly near the 3'-end of the 23S rRNA, where it nucleates assembly of the 50S subunit. This is Large ribosomal subunit protein uL3 from Streptococcus equi subsp. equi (strain 4047).